We begin with the raw amino-acid sequence, 404 residues long: S-adenosylmethionine synthase (404 aa).

Residue Gly139 to Asp144 participates in ATP binding.

This sequence belongs to the AdoMet synthase 2 family. Requires Mg(2+) as cofactor.

The catalysed reaction is L-methionine + ATP + H2O = S-adenosyl-L-methionine + phosphate + diphosphate. Its pathway is amino-acid biosynthesis; S-adenosyl-L-methionine biosynthesis; S-adenosyl-L-methionine from L-methionine: step 1/1. Its function is as follows. Catalyzes the formation of S-adenosylmethionine from methionine and ATP. The chain is S-adenosylmethionine synthase from Saccharolobus solfataricus (strain ATCC 35092 / DSM 1617 / JCM 11322 / P2) (Sulfolobus solfataricus).